The sequence spans 396 residues: Elongation factor Tu (396 aa).

A tr-type G domain is found at 10–206 (KPHVNVGTIG…ALDSYIPTPE (197 aa)). A G1 region spans residues 19-26 (GHVDHGKT). Position 19 to 26 (19 to 26 (GHVDHGKT)) interacts with GTP. Residue Thr-26 participates in Mg(2+) binding. Residues 60 to 64 (GITIN) are G2. The G3 stretch occupies residues 81–84 (DCPG). GTP contacts are provided by residues 81–85 (DCPGH) and 136–139 (NKCD). A G4 region spans residues 136 to 139 (NKCD). A G5 region spans residues 174–176 (SAL).

It belongs to the TRAFAC class translation factor GTPase superfamily. Classic translation factor GTPase family. EF-Tu/EF-1A subfamily. As to quaternary structure, monomer.

The protein resides in the cytoplasm. The enzyme catalyses GTP + H2O = GDP + phosphate + H(+). Its function is as follows. GTP hydrolase that promotes the GTP-dependent binding of aminoacyl-tRNA to the A-site of ribosomes during protein biosynthesis. This is Elongation factor Tu from Azoarcus sp. (strain BH72).